The following is a 183-amino-acid chain: MIIPKKNRNEICKYLFQEGVLYAKKDYNLAKHPQIDVPNLQVIKLMQSFKSKEYVRETFSWQYYYWYLTNDGIEHLRNYLNLPSEIVPATLKKSARPPGRPFGSGPPGDRPRGPPRFEGDRPRFGDRDGYRGGPRGAPGDFGGEKGGAPAEFQPSFRSSGGRPGFGRGGGGGFGAGPTSSSME.

Positions 91-183 are disordered; it reads LKKSARPPGR…GAGPTSSSME (93 aa). Over residues 109–130 the composition is skewed to basic and acidic residues; sequence DRPRGPPRFEGDRPRFGDRDGY. 2 stretches are compositionally biased toward gly residues: residues 131–146 and 161–175; these read RGGP…GEKG and GRPG…GFGA.

It belongs to the eukaryotic ribosomal protein eS10 family.

It localises to the cytoplasm. This is Small ribosomal subunit protein eS10z from Oryza sativa subsp. japonica (Rice).